A 387-amino-acid chain; its full sequence is Zinc finger protein neuro-d4 (387 aa).

Glycyl lysine isopeptide (Lys-Gly) (interchain with G-Cter in SUMO2) cross-links involve residues K106, K129, and K133. Residues 195–218 (YVCDICGKRYKNRPGLSYHYTHTH) form a C2H2-type zinc finger. 2 PHD-type zinc fingers span residues 271-328 (NGYC…CKSC) and 325-375 (CKSC…CLRH). Zn(2+)-binding residues include C274, C277, C293, C296, H301, C304, C322, C325, C328, C331, C343, C346, H351, C354, C369, and C372.

The protein belongs to the requiem/DPF family. As to quaternary structure, component of neuron-specific chromatin remodeling complex (nBAF complex) composed of at least, ARID1A/BAF250A or ARID1B/BAF250B, SMARCD1/BAF60A, SMARCD3/BAF60C, SMARCA2/BRM/BAF190B, SMARCA4/BRG1/BAF190A, SMARCB1/BAF47, SMARCC1/BAF155, SMARCE1/BAF57, SMARCC2/BAF170, DPF1/BAF45B, DPF3/BAF45C, ACTL6B/BAF53B and actin.

The protein localises to the cytoplasm. It is found in the nucleus. In terms of biological role, may have an important role in developing neurons by participating in regulation of cell survival, possibly as a neurospecific transcription factor. Belongs to the neuron-specific chromatin remodeling complex (nBAF complex). During neural development a switch from a stem/progenitor to a postmitotic chromatin remodeling mechanism occurs as neurons exit the cell cycle and become committed to their adult state. The transition from proliferating neural stem/progenitor cells to postmitotic neurons requires a switch in subunit composition of the npBAF and nBAF complexes. As neural progenitors exit mitosis and differentiate into neurons, npBAF complexes which contain ACTL6A/BAF53A and PHF10/BAF45A, are exchanged for homologous alternative ACTL6B/BAF53B and DPF1/BAF45B or DPF3/BAF45C subunits in neuron-specific complexes (nBAF). The npBAF complex is essential for the self-renewal/proliferative capacity of the multipotent neural stem cells. The nBAF complex along with CREST plays a role regulating the activity of genes essential for dendrite growth. This Homo sapiens (Human) protein is Zinc finger protein neuro-d4.